The following is a 542-amino-acid chain: Apolipoprotein N-acyltransferase (542 aa).

The next 6 helical transmembrane spans lie at 24–44 (VVAS…GLFA), 54–74 (VWCI…SWML), 85–105 (FVWG…SCLV), 116–136 (ALVW…YGLL), 160–180 (FFGW…CFAV), and 190–210 (GLWL…YEYL). The CN hydrolase domain maps to 220–499 (LRVAIVQPGY…TGVLQVSVPL (280 aa)). Glutamate 264 functions as the Proton acceptor in the catalytic mechanism. Residue lysine 349 is part of the active site. The active-site Nucleophile is the cysteine 404. A helical membrane pass occupies residues 509-529 (LGDAPLLLIAVCSVIGAIAYF).

The protein belongs to the CN hydrolase family. Apolipoprotein N-acyltransferase subfamily.

Its subcellular location is the cell inner membrane. The catalysed reaction is N-terminal S-1,2-diacyl-sn-glyceryl-L-cysteinyl-[lipoprotein] + a glycerophospholipid = N-acyl-S-1,2-diacyl-sn-glyceryl-L-cysteinyl-[lipoprotein] + a 2-acyl-sn-glycero-3-phospholipid + H(+). Its pathway is protein modification; lipoprotein biosynthesis (N-acyl transfer). Functionally, catalyzes the phospholipid dependent N-acylation of the N-terminal cysteine of apolipoprotein, the last step in lipoprotein maturation. This Chlamydia trachomatis serovar D (strain ATCC VR-885 / DSM 19411 / UW-3/Cx) protein is Apolipoprotein N-acyltransferase.